Reading from the N-terminus, the 144-residue chain is Small ribosomal subunit protein uS12 (144 aa).

Asp103 carries the post-translational modification 3-methylthioaspartic acid. The segment at 121 to 144 is disordered; the sequence is VANRKQGRSKYGTKKASAVPAKKK.

The protein belongs to the universal ribosomal protein uS12 family. In terms of assembly, part of the 30S ribosomal subunit. Contacts proteins S8 and S17. May interact with IF1 in the 30S initiation complex.

Its function is as follows. With S4 and S5 plays an important role in translational accuracy. In terms of biological role, interacts with and stabilizes bases of the 16S rRNA that are involved in tRNA selection in the A site and with the mRNA backbone. Located at the interface of the 30S and 50S subunits, it traverses the body of the 30S subunit contacting proteins on the other side and probably holding the rRNA structure together. The combined cluster of proteins S8, S12 and S17 appears to hold together the shoulder and platform of the 30S subunit. This chain is Small ribosomal subunit protein uS12, found in Roseiflexus castenholzii (strain DSM 13941 / HLO8).